Here is a 329-residue protein sequence, read N- to C-terminus: Ketol-acid reductoisomerase (NADP(+)) (329 aa).

Residues 2-182 enclose the KARI N-terminal Rossmann domain; the sequence is ARMYYEKDVD…GATRAGVLET (181 aa). NADP(+)-binding positions include 25-28, Ser51, Ser53, and 83-86; these read YGSQ and DEKQ. Residue His108 is part of the active site. Gly134 contacts NADP(+). A KARI C-terminal knotted domain is found at 183–328; it reads TFKEETETDL…RNLRSMMSFL (146 aa). Mg(2+) is bound by residues Asp191, Glu195, Glu227, and Glu231. Residue Ser252 coordinates substrate.

Belongs to the ketol-acid reductoisomerase family. It depends on Mg(2+) as a cofactor.

The enzyme catalyses (2R)-2,3-dihydroxy-3-methylbutanoate + NADP(+) = (2S)-2-acetolactate + NADPH + H(+). The catalysed reaction is (2R,3R)-2,3-dihydroxy-3-methylpentanoate + NADP(+) = (S)-2-ethyl-2-hydroxy-3-oxobutanoate + NADPH + H(+). It participates in amino-acid biosynthesis; L-isoleucine biosynthesis; L-isoleucine from 2-oxobutanoate: step 2/4. Its pathway is amino-acid biosynthesis; L-valine biosynthesis; L-valine from pyruvate: step 2/4. In terms of biological role, involved in the biosynthesis of branched-chain amino acids (BCAA). Catalyzes an alkyl-migration followed by a ketol-acid reduction of (S)-2-acetolactate (S2AL) to yield (R)-2,3-dihydroxy-isovalerate. In the isomerase reaction, S2AL is rearranged via a Mg-dependent methyl migration to produce 3-hydroxy-3-methyl-2-ketobutyrate (HMKB). In the reductase reaction, this 2-ketoacid undergoes a metal-dependent reduction by NADPH to yield (R)-2,3-dihydroxy-isovalerate. In Clostridioides difficile (strain 630) (Peptoclostridium difficile), this protein is Ketol-acid reductoisomerase (NADP(+)).